Consider the following 347-residue polypeptide: tRNA pseudouridine synthase D (347 aa).

The Nucleophile role is filled by Asp-81. The region spanning Gly-158 to Leu-304 is the TRUD domain.

It belongs to the pseudouridine synthase TruD family.

The catalysed reaction is uridine(13) in tRNA = pseudouridine(13) in tRNA. In terms of biological role, responsible for synthesis of pseudouridine from uracil-13 in transfer RNAs. The sequence is that of tRNA pseudouridine synthase D from Vibrio vulnificus (strain YJ016).